The following is a 767-amino-acid chain: MDQARSAFSNLFGGAPLSYTRFSLARQVDGDNSHVEMKLAVDEEENVDNNVRSNHASLTKPKRFNGSFCYAVIAVIIFFLIGFMIGYLGYCKRVEPKSECGRSGDSKEIEGTEPPETEEYFPETPSRLLWTDLRTMLSERLTATEFTNTIKRLNGNSYVPREAGSQKDESLAFFIENQFREFKLNKVWRDEHFVKIQVKGSNAQSSVTVVNGSGDMISLVENPTGYVAYSKATTVTGKLVHANFGTKEDYEALSYPVNGSLVIVRAGEITFAQKVANAESLNAVGVLIYMDQAKFPIVNANLPVFGHAHLGTGDPYTPGFPSFNHTQFPPSQSSGLPNIPVQTISRAAAEALFANMKGDCPSSWKTDSSCRLEFPGDKNVKLTVNNELKEIRIFNVFGVIKGFEEPDRYVVIGAQRDAWGPGAAKSSVGTALLLELARIFSDMVSKGGFKPSRSIVFASWGAGDFGAIGATEWLEGYLSSLHLKAFTYINLDKAVLGAKNFKVSASPLLYSLIEKTMQEVKHPVTGLSLYRDSNWINKVEKLSFDNAAFPFLAYSGIPALSFCFCEDTEYPYLGTTMDTYEVLSQNVPELSRLTRAAAEVAGQLLIKLSYDVELNLNYDMYNDKILSFVKDMNQFRADIKEMGLNLQWLYSARGDFFRATSRLTTDYKNAERANRVVMREINDRIMKVEYHFLSPYVSPRESPFRHIFWGSGSHTLSALLEHLKLRQKNSGAFNETLLRNQLALATWTIQGAANALSGDIWDIDNEF.

At M1–S67 the chain is on the cytoplasmic side. Phosphoserine occurs at positions 9 and 18. At Y19 the chain carries Phosphotyrosine. The Endocytosis signal motif lies at Y19–F22. T20 is subject to Phosphothreonine. S23 carries the post-translational modification Phosphoserine. The Stop-transfer sequence motif lies at K60–R63. A helical; Signal-anchor for type II membrane protein transmembrane segment spans residues F68–L88. Residue C69 is the site of S-palmitoyl cysteine attachment. Topologically, residues G89–F767 are extracellular. The span at P96–E110 shows a compositional bias: basic and acidic residues. Positions P96–P122 are disordered. Residues G111–F121 are compositionally biased toward acidic residues. N-linked (GlcNAc...) asparagine glycans are attached at residues N211, N258, and N324. Positions S230–F320 constitute a PA domain. The ligand-binding stretch occupies residues T576–F767. The Cell attachment site signature appears at R653–D655. Residue N734 is glycosylated (N-linked (GlcNAc...) asparagine).

This sequence belongs to the peptidase M28 family. M28B subfamily. As to quaternary structure, homodimer; disulfide-linked. Binds one transferrin or HFE molecule per subunit. Interacts with SH3BP4. Interacts with STEAP3; facilitates TFRC endocytosis in erythroid precursor cells. Post-translationally, stearoylated by ZDHHC6 which inhibits TFRC-mediated activation of the JNK pathway and promotes mitochondrial fragmentation. Stearoylation does not affect iron uptake.

Its subcellular location is the cell membrane. The protein resides in the melanosome. Its function is as follows. Cellular uptake of iron occurs via receptor-mediated endocytosis of ligand-occupied transferrin receptor into specialized endosomes. Endosomal acidification leads to iron release. The apotransferrin-receptor complex is then recycled to the cell surface with a return to neutral pH and the concomitant loss of affinity of apotransferrin for its receptor. Transferrin receptor is necessary for development of erythrocytes and the nervous system. Positively regulates T and B cell proliferation through iron uptake. Acts as a lipid sensor that regulates mitochondrial fusion by regulating activation of the JNK pathway. When dietary levels of stearate (C18:0) are low, promotes activation of the JNK pathway, resulting in HUWE1-mediated ubiquitination and subsequent degradation of the mitofusin MFN2 and inhibition of mitochondrial fusion. When dietary levels of stearate (C18:0) are high, TFRC stearoylation inhibits activation of the JNK pathway and thus degradation of the mitofusin MFN2. Mediates uptake of NICOL1 into fibroblasts where it may regulate extracellular matrix production. The protein is Transferrin receptor protein 1 (TFRC) of Equus caballus (Horse).